The chain runs to 322 residues: Cell division control protein 10 (322 aa).

Methionine 1 carries the N-acetylmethionine modification. One can recognise a Septin-type G domain in the interval 29–302; the sequence is KGFQFNIMVV…EGFRARQLIA (274 aa). The tract at residues 39–46 is G1 motif; the sequence is GQSGLGKS. GTP is bound by residues 39-46, threonine 74, glycine 100, and 180-188; these read GQSGLGKS and KSDTLTLDE. Residues 97–100 are G3 motif; sequence DTPG. The interval 179 to 182 is G4 motif; the sequence is GKSD. Threonine 216 bears the Phosphothreonine mark. The GTP site is built by glycine 236 and arginine 251.

It belongs to the TRAFAC class TrmE-Era-EngA-EngB-Septin-like GTPase superfamily. Septin GTPase family. Component of the septin complex which consists of CDC3, CDC10, CDC11, CDC12 and probably SHS1 and rearranges to a cortical collar of highly ordered filaments at the mother-bud-neck. A complex formed by CDC3, CDC10, CDC11 and CDC12 is capable of forming long filaments in vitro and the components seem to be present in a 2:2:2:2 arrangement in vivo. The filaments are proposed to be formed by the end-to-end polymerization of CDC3-CDC12-CDC11 complexes with CDC10 serving as a bridge to bundle the polymers into paired filaments. Component of the GIN4 complex composed of at least BNI5, CDC3, CDC10, CDC11, CDC12, GIN4, NAP1 and SHS1. Self-associates. Interacts with SYP1.

The protein resides in the membrane. The protein localises to the bud neck. Functionally, septins are GTPases involved in cytokinesis that assemble early in the cell cycle as a patch at the incipient bud site and form a ring approximate 15 minutes before bud emergence, which transforms into an hour-glass shaped collar of cortical filaments that spans both sides of the mother-bud neck. This collar persists until just before cytokinesis, when it splits into two rings that occupy opposite sides of the neck. The septins at the bud neck serve as a structural scaffold that recruits different components involved in diverse processes at specific stages during the cell cycle. Many proteins bind asymmetrically to the septin collar. The septin assembly is regulated by protein kinases GIN4 and/or CLA4. May act by recruiting MYO1 and HOF1, a protein involved in septation, to the site of cleavage. Septins are also involved in cell morphogenesis, bud site selection, chitin deposition, cell cycle regulation, cell compartmentalization and spore wall formation. This chain is Cell division control protein 10 (CDC10), found in Saccharomyces cerevisiae (strain ATCC 204508 / S288c) (Baker's yeast).